The sequence spans 491 residues: Ketol-acid reductoisomerase (NADP(+)) (491 aa).

One can recognise a KARI N-terminal Rossmann domain in the interval 15-208 (AQLGKCRFMG…GGHRAGVLES (194 aa)). NADP(+) is bound by residues 45 to 48 (CGAQ), Arg-68, Arg-76, Ser-78, and 108 to 110 (DKQ). His-132 is a catalytic residue. Gly-158 provides a ligand contact to NADP(+). KARI C-terminal knotted domains lie at 209–344 (SFVA…TAPQ) and 345–484 (YEGK…MTDM). Residues Asp-217, Glu-221, Glu-389, and Glu-393 each contribute to the Mg(2+) site. A substrate-binding site is contributed by Ser-414.

Belongs to the ketol-acid reductoisomerase family. Mg(2+) serves as cofactor.

It catalyses the reaction (2R)-2,3-dihydroxy-3-methylbutanoate + NADP(+) = (2S)-2-acetolactate + NADPH + H(+). It carries out the reaction (2R,3R)-2,3-dihydroxy-3-methylpentanoate + NADP(+) = (S)-2-ethyl-2-hydroxy-3-oxobutanoate + NADPH + H(+). It functions in the pathway amino-acid biosynthesis; L-isoleucine biosynthesis; L-isoleucine from 2-oxobutanoate: step 2/4. Its pathway is amino-acid biosynthesis; L-valine biosynthesis; L-valine from pyruvate: step 2/4. Involved in the biosynthesis of branched-chain amino acids (BCAA). Catalyzes an alkyl-migration followed by a ketol-acid reduction of (S)-2-acetolactate (S2AL) to yield (R)-2,3-dihydroxy-isovalerate. In the isomerase reaction, S2AL is rearranged via a Mg-dependent methyl migration to produce 3-hydroxy-3-methyl-2-ketobutyrate (HMKB). In the reductase reaction, this 2-ketoacid undergoes a metal-dependent reduction by NADPH to yield (R)-2,3-dihydroxy-isovalerate. The sequence is that of Ketol-acid reductoisomerase (NADP(+)) from Escherichia coli O157:H7.